The chain runs to 405 residues: Arginine deiminase (405 aa).

Cys395 serves as the catalytic Amidino-cysteine intermediate.

The protein belongs to the arginine deiminase family.

It is found in the cytoplasm. The catalysed reaction is L-arginine + H2O = L-citrulline + NH4(+). It functions in the pathway amino-acid degradation; L-arginine degradation via ADI pathway; carbamoyl phosphate from L-arginine: step 1/2. The chain is Arginine deiminase from Rhodococcus erythropolis (strain PR4 / NBRC 100887).